A 363-amino-acid chain; its full sequence is Chorismate synthase (363 aa).

Residues R48 and R54 each coordinate NADP(+). FMN contacts are provided by residues R125–S127, N238–A239, G278, K293–S297, and R319.

Belongs to the chorismate synthase family. Homotetramer. The cofactor is FMNH2.

The catalysed reaction is 5-O-(1-carboxyvinyl)-3-phosphoshikimate = chorismate + phosphate. Its pathway is metabolic intermediate biosynthesis; chorismate biosynthesis; chorismate from D-erythrose 4-phosphate and phosphoenolpyruvate: step 7/7. Its function is as follows. Catalyzes the anti-1,4-elimination of the C-3 phosphate and the C-6 proR hydrogen from 5-enolpyruvylshikimate-3-phosphate (EPSP) to yield chorismate, which is the branch point compound that serves as the starting substrate for the three terminal pathways of aromatic amino acid biosynthesis. This reaction introduces a second double bond into the aromatic ring system. This is Chorismate synthase from Alcanivorax borkumensis (strain ATCC 700651 / DSM 11573 / NCIMB 13689 / SK2).